The sequence spans 161 residues: Dihydrofolate reductase (161 aa).

The DHFR domain occupies 2–161 (NISLIAAISK…YNYSFEILSR (160 aa)). 6–8 (IAA) contacts substrate. NADP(+)-binding positions include 7 to 8 (AA) and 15 to 20 (IGYKNK). Asp28 serves as a coordination point for substrate. An NADP(+)-binding site is contributed by 44 to 47 (GRLT). Residue Arg59 participates in substrate binding. NADP(+) contacts are provided by residues 64–66 (ISS) and 96–101 (IGGAKI). Thr115 lines the substrate pocket.

The protein belongs to the dihydrofolate reductase family.

It carries out the reaction (6S)-5,6,7,8-tetrahydrofolate + NADP(+) = 7,8-dihydrofolate + NADPH + H(+). It participates in cofactor biosynthesis; tetrahydrofolate biosynthesis; 5,6,7,8-tetrahydrofolate from 7,8-dihydrofolate: step 1/1. Functionally, key enzyme in folate metabolism. Catalyzes an essential reaction for de novo glycine and purine synthesis, and for DNA precursor synthesis. The protein is Dihydrofolate reductase (folA) of Buchnera aphidicola subsp. Acyrthosiphon pisum (strain APS) (Acyrthosiphon pisum symbiotic bacterium).